Reading from the N-terminus, the 266-residue chain is Undecaprenyl-diphosphatase (266 aa).

7 helical membrane passes run 41–61, 80–100, 107–127, 140–160, 180–200, 213–233, and 245–265; these read NLAF…VVLW, TKYV…GVFF, IFGS…ALLA, ISMK…MPGL, LAQF…LLDV, IPAL…CVAC, and LIYF…CTLL.

The protein belongs to the UppP family.

It localises to the cell inner membrane. The catalysed reaction is di-trans,octa-cis-undecaprenyl diphosphate + H2O = di-trans,octa-cis-undecaprenyl phosphate + phosphate + H(+). In terms of biological role, catalyzes the dephosphorylation of undecaprenyl diphosphate (UPP). Confers resistance to bacitracin. The sequence is that of Undecaprenyl-diphosphatase from Parabacteroides distasonis (strain ATCC 8503 / DSM 20701 / CIP 104284 / JCM 5825 / NCTC 11152).